The following is a 451-amino-acid chain: Probable V-type proton ATPase subunit H 1 (451 aa).

It belongs to the V-ATPase H subunit family. V-ATPase is a heteromultimeric enzyme made up of two complexes: the ATP-hydrolytic V1 complex and the proton translocation V0 complex. The V1 complex consists of three catalytic AB heterodimers that form a heterohexamer, three peripheral stalks each consisting of EG heterodimers, one central rotor including subunits D and F, and the regulatory subunits C and H. The proton translocation complex V0 consists of the proton transport subunit a, a ring of proteolipid subunits c9c'', rotary subunit d, subunits e and f, and the accessory subunits vah-19/Ac45 and vah-20/PRR.

Its function is as follows. Subunit of the V1 complex of vacuolar(H+)-ATPase (V-ATPase), a multisubunit enzyme composed of a peripheral complex (V1) that hydrolyzes ATP and a membrane integral complex (V0) that translocates protons. V-ATPase is responsible for acidifying and maintaining the pH of intracellular compartments and in some cell types, is targeted to the plasma membrane, where it is responsible for acidifying the extracellular environment. Subunit H is essential for V-ATPase activity, but not for the assembly of the complex. This is Probable V-type proton ATPase subunit H 1 from Caenorhabditis elegans.